The sequence spans 749 residues: Protein SWAP (749 aa).

Positions 8-124 (SNVHVQEYKD…RNDQRNAIGF (117 aa)) are dry CEEERYL. A compositionally biased stretch (basic and acidic residues) spans 105 to 118 (EQEKEEEEKRRNDQ). Residues 105–149 (EQEKEEEEKRRNDQRNAIGFDYGTGKVKARESDSEDEPFEPPEGI) form a disordered region. An SURP motif 1 repeat occupies 166-209 (IIEKTASFIVANGTQMEIVIKAKQRNNAEQFGFLEFDHRLNPFY). The segment at 256 to 310 (HGSDSEDSDSDYELHPSLLSGGAKRPVTPEKPGAIGPRKKPVEPEKPPDFTLKPV) is disordered. Residues 391 to 431 (ILNSYAEHVAQRGLEAEASLAAREDLQLHFMEPKSPYYSYY) form an SURP motif 2 repeat. Residues 458–478 (PAPPSAVSSPGPSSLMSLNLS) are compositionally biased toward low complexity. Disordered regions lie at residues 458-498 (PAPP…SSRL), 537-592 (LRND…QVDR), and 608-749 (KAKK…DRRR). The segment covering 538-552 (RNDEPRDESSFRFDP) has biased composition (basic and acidic residues). The span at 560-569 (PSDTTANFSD) shows a compositional bias: polar residues. Pro residues predominate over residues 574–583 (FPPPTPPVIP). Composition is skewed to basic and acidic residues over residues 608–659 (KAKK…RSLD) and 679–689 (EEMKRTDEDRE). Basic residues-rich tracts occupy residues 690–704 (RKRH…RRSR) and 714–749 (EHKK…DRRR).

Its function is as follows. It is a regulator of pre-mRNA splicing (and, possibly, of other RNA processing events). It may regulate its own expression at the level of RNA processing. In Caenorhabditis elegans, this protein is Protein SWAP (swp-1).